Here is a 455-residue protein sequence, read N- to C-terminus: MLEYTAGLIRRNKKKFLISSGIIGVGYYVTKTINNKIQEFQNRIREENFAKEQIKRRFHQTQSDCYMTFLSLLPVLCEPIMDDLPVETITKQLQIRRLEKQIGNKDVKNSGSTVLSDDFSTSQEGAISEDTNKPPELKSKNQLWQELKIKAITRFLTLIYCESLLIVFLHLQLNILSRKSYLETAIRLASETQGIDLVDQESNGDFSGNTQDENLSEQAFLSFSWWLLNKGWLEIKNKIEPCVEQHFGGINPRQQLKINEFAELLNKCQNCIDLKVLNLTEDDIHLGVGVIEDQSQPVGRKSTNFITNALLPPKEFEFFLLQQTNDLDFLSRFNNNIVNTESLNMLLDELNNYLNNADINLIVNKLATLGITKVLDEIVLNLLQKNRPNPISDMNIRDIDLNDFPPYKLAALLANITKQSISLTNNSVENPILADLNNLPELNDLSASVYSNFDP.

Over residues 113–125 the composition is skewed to polar residues; it reads TVLSDDFSTSQEG. The segment at 113–135 is disordered; sequence TVLSDDFSTSQEGAISEDTNKPP. Residues 155-171 traverse the membrane as a helical segment; that stretch reads FLTLIYCESLLIVFLHL.

This sequence belongs to the peroxin-3 family. As to quaternary structure, component of the peroxisomal docking complex, composed of at least PEX3, PEX13, PEX14 and PEX17. Component of the peroxisomal translocation complex, composed of at least PEX3, PEX2, PEX10 and PEX12. Interacts with PEX19. Interacts with the pexophagy receptor ATG30.

The protein localises to the peroxisome membrane. In terms of biological role, peroxisomal membrane protein required for peroxisome biosynthesis. Shared component of both the peroxisomal docking complex and the peroxisomal translocation complex. The two types of peroxisomal matrix targeting signals, PTS1 and PTS2, are first recognized in the cytosol by their receptors PEX5 and PEX7, respectively, which then carry the cargo to the peroxisomal membrane. The peroxisomal targeting signal (PTS) receptor-cargo complexes interact with peroxisomal membrane protein (PMP) components of the docking complex. They have then additional downstream interactions with the translocation complex, leading to the transport of fully folded and oligomerized cargo into the peroxisome matrix. PEX3 acts as an anchoring site for PEX19 on the peroxisomal membrane and thus plays a crucial role in the assembly of the peroxisomal translocation complex. Is also essential for the interaction between the two complexes. Finally. PEX3 activates selective autophagy of peroxisomes (pexophagy) via interaction with the pexophagy receptor ATG30. This Komagataella phaffii (strain GS115 / ATCC 20864) (Yeast) protein is Peroxisomal membrane protein PEX3.